A 195-amino-acid polypeptide reads, in one-letter code: Myelin-associated neurite-outgrowth inhibitor (195 aa).

Over 1–18 (MNPVYSPGSSGVPYANAK) the chain is Cytoplasmic. Residues 19–43 (GIGYPAGFPMGYAAAAPAYSPNMYA) form a helical membrane-spanning segment. Residues 44 to 143 (GPNPAFQPGY…APIPQPRGNG (100 aa)) lie on the Extracellular side of the membrane. A helical transmembrane segment spans residues 144–162 (VAMGMVAGTTMAMSAGTLL). Over 163–195 (TSHYPTPVAPHQVTMPTYRPPGTPTYSYVPPQW) the chain is Cytoplasmic.

The protein belongs to the FAM168 family.

It is found in the cytoplasm. The protein localises to the perinuclear region. It localises to the cell membrane. The protein resides in the cell projection. Its subcellular location is the axon. Inhibitor of neuronal axonal outgrowth. The sequence is that of Myelin-associated neurite-outgrowth inhibitor (fam168b) from Xenopus tropicalis (Western clawed frog).